Reading from the N-terminus, the 241-residue chain is Xyloglucan-specific endo-beta-1,4-glucanase 1 (241 aa).

Positions 1-19 are cleaved as a signal peptide; the sequence is MKGLLAGTIAAATFAVASA. E136 is an active-site residue. N-linked (GlcNAc...) asparagine glycosylation is found at N174 and N190. E222 is an active-site residue.

This sequence belongs to the glycosyl hydrolase 12 (cellulase H) family. Interacts with host apoplastic glucanase inhibitor GIP2.

The catalysed reaction is xyloglucan + H2O = xyloglucan oligosaccharides.. The xyloglucanase activity is inhibited by the binding of the host apoplastic glucanase inhibitor GIP2. Glycoside hydrolase that exhibits xyloglucanase activity. Acts as an important virulence factor during P.parasitica infection of its host Nicotiana benthamiana. Also acts as a pathogen-associated molecular pattern (PAMP) in host species, where it can trigger defense responses including cell death. The PAMP activity is independent of its xyloglucanase activity. With paralog XLP1, is required to elevate apoplastic sugar during P.parasitica infection. This is Xyloglucan-specific endo-beta-1,4-glucanase 1 from Phytophthora nicotianae (strain INRA-310) (Phytophthora parasitica).